The chain runs to 301 residues: Protein RESTRICTED TEV MOVEMENT 3 (301 aa).

One can recognise an MATH domain in the interval 6–134; that stretch reads DKKITWTIKN…NGELKIVVEI (129 aa). Residues 235–289 adopt a coiled-coil conformation; that stretch reads KLDWLEKKLYEVSEKKENEEASETGLQEMEEELKDMKQKCLEMEALVEKEKAKVS.

As to quaternary structure, self-interacts. Interacts with RTM1.

In terms of biological role, required for the restriction of long-distance movement of the pathogenic tobacco etch virus (TEV) without causing a hypersensitive response or inducing systemic acquired resistance. The sequence is that of Protein RESTRICTED TEV MOVEMENT 3 (RTM3) from Arabidopsis thaliana (Mouse-ear cress).